An 86-amino-acid chain; its full sequence is U22-theraphotoxin-Cg1a (86 aa).

The first 20 residues, 1–20 (MKVSVVLAITVLALLSVAYA), serve as a signal peptide directing secretion. The propeptide occupies 21–51 (SEFEEKELVKEVVRTIFLGKEDAALREETDR). 3 cysteine pairs are disulfide-bonded: C53/C67, C60/C72, and C66/C79. F85 carries the phenylalanine amide modification.

Belongs to the neurotoxin 10 (Hwtx-1) family. 42 (Jztx-44) subfamily. As to expression, expressed by the venom gland.

The protein localises to the secreted. In terms of biological role, probable ion channel inhibitor. In Chilobrachys guangxiensis (Chinese earth tiger tarantula), this protein is U22-theraphotoxin-Cg1a.